The primary structure comprises 1404 residues: DNA-directed RNA polymerase subunit beta' (1404 aa).

The Zn(2+) site is built by Cys-70, Cys-72, Cys-85, and Cys-88. Positions 458, 460, and 462 each coordinate Mg(2+). Positions 813, 887, 894, and 897 each coordinate Zn(2+). Positions 1377–1404 (ERRAIAESEAAELEASQAETSDENAAAE) are disordered.

Belongs to the RNA polymerase beta' chain family. The RNAP catalytic core consists of 2 alpha, 1 beta, 1 beta' and 1 omega subunit. When a sigma factor is associated with the core the holoenzyme is formed, which can initiate transcription. Mg(2+) serves as cofactor. Zn(2+) is required as a cofactor.

The catalysed reaction is RNA(n) + a ribonucleoside 5'-triphosphate = RNA(n+1) + diphosphate. Its function is as follows. DNA-dependent RNA polymerase catalyzes the transcription of DNA into RNA using the four ribonucleoside triphosphates as substrates. This is DNA-directed RNA polymerase subunit beta' from Polaromonas naphthalenivorans (strain CJ2).